Reading from the N-terminus, the 911-residue chain is Transferrin-binding protein A (911 aa).

Positions 1–24 (MQQQHLFRLNILCLSLMTALPAYA) are cleaved as a signal peptide. The TonB box signature appears at 38–45 (DTIQVKAK). One can recognise a TBDR plug domain in the interval 51-176 (RDNEVTGLGK…LAGSVAFQTK (126 aa)). The region spanning 187 to 911 (QWGIQSKTAY…NYTFSLEMKF (725 aa)) is the TBDR beta-barrel domain. The short motif at 894 to 911 (NRYAAPGRNYTFSLEMKF) is the TonB C-terminal box element.

Belongs to the TonB-dependent receptor family. As to quaternary structure, binds both human apo- and holo-transferrin (TF), via the TF C-terminus. Forms a large complex with TF and TbpB.

Its subcellular location is the cell outer membrane. Functionally, neisseria acquires iron by extracting it from serum transferrin (TF) in its human host. Acts as a TF receptor and is required for TF utilization. Binds both apo- and holo-TF, via the TF C-terminus. The chain is Transferrin-binding protein A from Neisseria meningitidis serogroup B.